The primary structure comprises 294 residues: 2-hydroxy-3-oxopropionate reductase (294 aa).

NAD(+) contacts are provided by residues 4–18 (GFIG…MSKN) and Ser-95. Lys-170 is a catalytic residue. Residue Lys-238 coordinates NAD(+).

The protein belongs to the HIBADH-related family. 2-hydroxy-3-oxopropionate reductase subfamily.

It carries out the reaction (R)-glycerate + NADP(+) = 2-hydroxy-3-oxopropanoate + NADPH + H(+). The enzyme catalyses (R)-glycerate + NAD(+) = 2-hydroxy-3-oxopropanoate + NADH + H(+). It functions in the pathway carbohydrate acid metabolism; galactarate degradation; D-glycerate from galactarate: step 3/3. Functionally, catalyzes the reduction of tatronate semialdehyde to D-glycerate. This is 2-hydroxy-3-oxopropionate reductase from Escherichia coli O6:H1 (strain CFT073 / ATCC 700928 / UPEC).